We begin with the raw amino-acid sequence, 455 residues long: Peroxisomal membrane protein PEX3 (455 aa).

Residues 113-125 (TVLSDDFSTSQEG) are compositionally biased toward polar residues. Residues 113–135 (TVLSDDFSTSQEGAISEDTNKPP) are disordered. Residues 155-171 (FLTLIYCESLLIVFLHL) form a helical membrane-spanning segment.

This sequence belongs to the peroxin-3 family. In terms of assembly, component of the peroxisomal docking complex, composed of at least PEX3, PEX13, PEX14 and PEX17. Component of the peroxisomal translocation complex, composed of at least PEX3, PEX2, PEX10 and PEX12. Interacts with PEX19. Interacts with the pexophagy receptor ATG30.

The protein localises to the peroxisome membrane. Peroxisomal membrane protein required for peroxisome biosynthesis. Shared component of both the peroxisomal docking complex and the peroxisomal translocation complex. The two types of peroxisomal matrix targeting signals, PTS1 and PTS2, are first recognized in the cytosol by their receptors PEX5 and PEX7, respectively, which then carry the cargo to the peroxisomal membrane. The peroxisomal targeting signal (PTS) receptor-cargo complexes interact with peroxisomal membrane protein (PMP) components of the docking complex. They have then additional downstream interactions with the translocation complex, leading to the transport of fully folded and oligomerized cargo into the peroxisome matrix. PEX3 acts as an anchoring site for PEX19 on the peroxisomal membrane and thus plays a crucial role in the assembly of the peroxisomal translocation complex. Is also essential for the interaction between the two complexes. Finally. PEX3 activates selective autophagy of peroxisomes (pexophagy) via interaction with the pexophagy receptor ATG30. The chain is Peroxisomal membrane protein PEX3 from Komagataella pastoris (Yeast).